The sequence spans 347 residues: Isopentenyl-diphosphate delta-isomerase (347 aa).

Positions 1 to 31 (MDESNSQFEKRKRDHIRIALDPRSQTDGQNG) are disordered. Over residues 8–20 (FEKRKRDHIRIAL) the composition is skewed to basic and acidic residues. 11–12 (RK) contacts substrate. FMN contacts are provided by residues serine 72, 73 to 75 (SMT), serine 103, and asparagine 132. 103–105 (SQR) is a substrate binding site. Residue glutamine 166 participates in substrate binding. Residue glutamate 167 participates in Mg(2+) binding. Residues lysine 198, serine 223, threonine 228, 279–281 (GVR), and 300–301 (AK) contribute to the FMN site.

It belongs to the IPP isomerase type 2 family. In terms of assembly, homooctamer. Dimer of tetramers. FMN serves as cofactor. It depends on NADPH as a cofactor. Requires Mg(2+) as cofactor.

The protein resides in the cytoplasm. It catalyses the reaction isopentenyl diphosphate = dimethylallyl diphosphate. Involved in the biosynthesis of isoprenoids. Catalyzes the 1,3-allylic rearrangement of the homoallylic substrate isopentenyl (IPP) to its allylic isomer, dimethylallyl diphosphate (DMAPP). In Bdellovibrio bacteriovorus (strain ATCC 15356 / DSM 50701 / NCIMB 9529 / HD100), this protein is Isopentenyl-diphosphate delta-isomerase.